Consider the following 486-residue polypeptide: BTB/POZ domain and ankyrin repeat-containing protein BOP (486 aa).

Residues 25 to 115 (SDVTFSVEGR…LYSGQVSIVP (91 aa)) form the BTB domain. The C2HC NPR-type zinc-finger motif lies at 121–135 (RPNCGERGCWHTHCS). Zn(2+) is bound by residues cysteine 124, cysteine 129, histidine 131, and cysteine 134. ANK repeat units lie at residues 257–286 (QKIR…LNLD), 287–316 (EALA…DVNY), 321–350 (AGKT…DPNV), and 354–388 (DNVT…KLRL). Disordered regions lie at residues 403-442 (EEGN…NHNI) and 464-486 (QMSD…HHDY). 2 stretches are compositionally biased toward low complexity: residues 406–418 (NANN…TTTT) and 432–442 (SSSSSGNNHNI). A compositionally biased stretch (basic and acidic residues) spans 466 to 475 (SDDHGGRHGD).

This sequence belongs to the plant 'ANKYRIN-BTB/POZ' family. 'NOOT-BOP-COCH-like' (NBCL) subfamily. As to quaternary structure, homodimer. Expressed in xylem vessels and parenchyma cells of pedicel vascular tissue in the abscission zone (AZ). Accumulates in developing root nodules and present in roots, especially in the upper part.

Its subcellular location is the nucleus. The protein resides in the cytoplasm. It localises to the cell membrane. Its pathway is protein modification; protein ubiquitination. Its function is as follows. May act as a substrate-specific adapter of an E3 ubiquitin-protein ligase complex (CUL3-RBX1-BTB) which mediates the ubiquitination and subsequent proteasomal degradation of target proteins. Transcriptional co-regulator involved in promoting the fate and determination of leaf and flower meristems. Required for the abscission of senescent organs, probably by regulating the cell wall disorganization in abscission zones (AZs, e.g. pulvini at the base of leaves). Involved in the coordination of the symbiotic nodule developmental program; promotes the formation of root nodules by interacting directly with APP1 to modulate the expression of the nuclear transcription factor Y subunit (NF-YA1), a key nodulin. Necessary for the robust maintenance of nodule identity throughout the nodule developmental program. This is BTB/POZ domain and ankyrin repeat-containing protein BOP from Lupinus luteus (European yellow lupine).